The chain runs to 261 residues: Cytochrome c oxidase subunit 3 (261 aa).

The Mitochondrial matrix segment spans residues 1 to 15; sequence MTHQTHAYHMVNPSP. Residues 16–33 traverse the membrane as a helical segment; that stretch reads WPLTGAFSALLLTSGLVM. The Mitochondrial intermembrane portion of the chain corresponds to 34 to 38; it reads WFHYN. The chain crosses the membrane as a helical span at residues 39-62; it reads SITLLTLGLLTNILTMYQWWRDVI. Residues 63–77 are Mitochondrial matrix-facing; sequence REGTYQGHHTPIVQK. A helical membrane pass occupies residues 78-99; the sequence is GLRYGMILFIVSEVFFFAGFFW. Residues 100–129 are Mitochondrial intermembrane-facing; that stretch reads AFYHSSLVPTHDLGGCWPPTGISPLNPLEV. Residues 130 to 150 traverse the membrane as a helical segment; the sequence is PLLNTSVLLASGVSITWAHHS. The Mitochondrial matrix portion of the chain corresponds to 151 to 156; that stretch reads LMEGKR. A helical membrane pass occupies residues 157 to 178; the sequence is NHMNQALLITIMLGLYFTILQA. The Mitochondrial intermembrane portion of the chain corresponds to 179–198; sequence SEYFETSFSISDGIYGSTFF. The chain crosses the membrane as a helical span at residues 199–224; the sequence is MATGFHGLHVIIGSTFLIVCLLRQLK. Topologically, residues 225–232 are mitochondrial matrix; it reads FHFTSKHH. Residues 233–255 form a helical membrane-spanning segment; it reads FGFEAAAWYWHFVDVVWLFLYVS. Residues 256–261 are Mitochondrial intermembrane-facing; sequence IYWWGS.

Belongs to the cytochrome c oxidase subunit 3 family. Component of the cytochrome c oxidase (complex IV, CIV), a multisubunit enzyme composed of 14 subunits. The complex is composed of a catalytic core of 3 subunits MT-CO1, MT-CO2 and MT-CO3, encoded in the mitochondrial DNA, and 11 supernumerary subunits COX4I, COX5A, COX5B, COX6A, COX6B, COX6C, COX7A, COX7B, COX7C, COX8 and NDUFA4, which are encoded in the nuclear genome. The complex exists as a monomer or a dimer and forms supercomplexes (SCs) in the inner mitochondrial membrane with NADH-ubiquinone oxidoreductase (complex I, CI) and ubiquinol-cytochrome c oxidoreductase (cytochrome b-c1 complex, complex III, CIII), resulting in different assemblies (supercomplex SCI(1)III(2)IV(1) and megacomplex MCI(2)III(2)IV(2)).

The protein localises to the mitochondrion inner membrane. It carries out the reaction 4 Fe(II)-[cytochrome c] + O2 + 8 H(+)(in) = 4 Fe(III)-[cytochrome c] + 2 H2O + 4 H(+)(out). Functionally, component of the cytochrome c oxidase, the last enzyme in the mitochondrial electron transport chain which drives oxidative phosphorylation. The respiratory chain contains 3 multisubunit complexes succinate dehydrogenase (complex II, CII), ubiquinol-cytochrome c oxidoreductase (cytochrome b-c1 complex, complex III, CIII) and cytochrome c oxidase (complex IV, CIV), that cooperate to transfer electrons derived from NADH and succinate to molecular oxygen, creating an electrochemical gradient over the inner membrane that drives transmembrane transport and the ATP synthase. Cytochrome c oxidase is the component of the respiratory chain that catalyzes the reduction of oxygen to water. Electrons originating from reduced cytochrome c in the intermembrane space (IMS) are transferred via the dinuclear copper A center (CU(A)) of subunit 2 and heme A of subunit 1 to the active site in subunit 1, a binuclear center (BNC) formed by heme A3 and copper B (CU(B)). The BNC reduces molecular oxygen to 2 water molecules using 4 electrons from cytochrome c in the IMS and 4 protons from the mitochondrial matrix. In Mus musculus (Mouse), this protein is Cytochrome c oxidase subunit 3 (mt-Co3).